A 243-amino-acid chain; its full sequence is Ribonuclease PH (243 aa).

Phosphate-binding positions include Arg91 and 129–131 (GTR).

The protein belongs to the RNase PH family. As to quaternary structure, homohexameric ring arranged as a trimer of dimers.

The catalysed reaction is tRNA(n+1) + phosphate = tRNA(n) + a ribonucleoside 5'-diphosphate. Phosphorolytic 3'-5' exoribonuclease that plays an important role in tRNA 3'-end maturation. Removes nucleotide residues following the 3'-CCA terminus of tRNAs; can also add nucleotides to the ends of RNA molecules by using nucleoside diphosphates as substrates, but this may not be physiologically important. Probably plays a role in initiation of 16S rRNA degradation (leading to ribosome degradation) during starvation. The chain is Ribonuclease PH from Burkholderia lata (strain ATCC 17760 / DSM 23089 / LMG 22485 / NCIMB 9086 / R18194 / 383).